Consider the following 803-residue polypeptide: H(+)/Cl(-) exchange transporter 7 (803 aa).

Positions 1–46 (MANVSKKVSWSGRDRDDEEGAPLLRRTGQPDEETPLLNGAGPGARQ) are disordered. The Cytoplasmic portion of the chain corresponds to 1 to 124 (MANVSKKVSW…TAFRTVEIKR (124 aa)). Ser-9 is modified (phosphoserine). 2 helical membrane-spanning segments follow: residues 125–157 (WVIC…YRVI) and 172–195 (FSLL…VAFI). The Selectivity filter part_1 signature appears at 201 to 205 (GSGIP). A chloride-binding site is contributed by Ser-202. The helical intramembrane region spans 204-211 (IPQIKCFL). A run of 2 helical transmembrane segments spans residues 221–239 (RLKT…VVGG) and 245–262 (EGPM…ISQG). Residues 243 to 247 (GKEGP) carry the Selectivity filter part_2 motif. Intramembrane regions (helical) lie at residues 286-298 (FVSA…VSAA) and 302-310 (PVGGVLFSL). Transmembrane regions (helical) follow at residues 320 to 339 (FLTW…LNFV), 373 to 403 (IPVF…FRIR), 408 to 430 (PCLQ…FVLI), 485 to 505 (PMTL…TYGL), and 510 to 533 (GVFI…MSYL). Positions 510-514 (GVFIP) match the Selectivity filter part_3 motif. Phe-512 is a chloride binding site. An intramembrane region (helical) is located at residues 543–557 (GKYALMGAAAQLGGI). The note=Loop between two helices intramembrane region spans 558–560 (VRM). Residues 561–572 (TLSLTVIMMEAT) constitute an intramembrane region (helical). An intramembrane region (note=Loop between two helices) is located at residues 573–576 (SNVT). The chain crosses the membrane as a helical span at residues 577–595 (YGFPIMLVLMTAKIVGDVF). The Cytoplasmic portion of the chain corresponds to 596 to 803 (IEGLYDMHIQ…GLEELSLAQT (208 aa)). Position 600 (Tyr-600) interacts with chloride. CBS domains are found at residues 629 to 693 (MSTP…VFVE) and 739 to 797 (MNPS…GLEE). ATP contacts are provided by residues 656–658 (HNG) and 781–784 (TRKD). Ser-799 bears the Phosphoserine mark.

This sequence belongs to the chloride channel (TC 2.A.49) family. ClC-7/CLCN7 subfamily. As to quaternary structure, chloride channel 7 are heteromers of alpha (CLCN7) and beta (OSTM1) subunits. Brain, testis, muscle and kidney.

It is found in the lysosome membrane. The catalysed reaction is 2 chloride(in) + H(+)(out) = 2 chloride(out) + H(+)(in). Functionally, slowly voltage-gated channel mediating the exchange of chloride ions against protons. Functions as antiporter and contributes to the acidification of the lysosome lumen and may be involved in maintaining lysosomal pH. The CLC channel family contains both chloride channels and proton-coupled anion transporters that exchange chloride or another anion for protons. The presence of conserved gating glutamate residues is typical for family members that function as antiporters. This chain is H(+)/Cl(-) exchange transporter 7 (Clcn7), found in Rattus norvegicus (Rat).